Consider the following 218-residue polypeptide: Protein GrpE (218 aa).

A compositionally biased stretch (basic and acidic residues) spans 1 to 21; it reads MSDKQREAERQQSEDKAHSEA. A disordered region spans residues 1-66; the sequence is MSDKQREAER…LEEARARAEE (66 aa). Over residues 24-36 the composition is skewed to low complexity; that stretch reads AEAGQAPEAQAAE.

This sequence belongs to the GrpE family. Homodimer.

Its subcellular location is the cytoplasm. Its function is as follows. Participates actively in the response to hyperosmotic and heat shock by preventing the aggregation of stress-denatured proteins, in association with DnaK and GrpE. It is the nucleotide exchange factor for DnaK and may function as a thermosensor. Unfolded proteins bind initially to DnaJ; upon interaction with the DnaJ-bound protein, DnaK hydrolyzes its bound ATP, resulting in the formation of a stable complex. GrpE releases ADP from DnaK; ATP binding to DnaK triggers the release of the substrate protein, thus completing the reaction cycle. Several rounds of ATP-dependent interactions between DnaJ, DnaK and GrpE are required for fully efficient folding. This chain is Protein GrpE, found in Alkalilimnicola ehrlichii (strain ATCC BAA-1101 / DSM 17681 / MLHE-1).